The sequence spans 68 residues: Lipopolysaccharide export system ATP-binding protein LptB (68 aa).

The protein belongs to the ABC transporter superfamily. Outer membrane lipopolysaccharide export (TC 1.B.42) family. As to quaternary structure, component of the lipopolysaccharide transport and assembly complex. The LptBFG transporter is composed of two ATP-binding proteins (LptB) and two transmembrane proteins (LptF and LptG).

The protein localises to the cytoplasm. It localises to the cell inner membrane. Its function is as follows. Part of the ABC transporter complex LptBFG involved in the translocation of lipopolysaccharide (LPS) from the inner membrane to the outer membrane. Probably responsible for energy coupling to the transport system. The sequence is that of Lipopolysaccharide export system ATP-binding protein LptB (lptB) from Klebsiella oxytoca.